Consider the following 341-residue polypeptide: tRNA N6-adenosine threonylcarbamoyltransferase (341 aa).

Residues His119 and His123 each contribute to the Fe cation site. Substrate is bound by residues Met141–Gly145, Asp174, Gly187, and Asn279. Asp307 contacts Fe cation.

This sequence belongs to the KAE1 / TsaD family. It depends on Fe(2+) as a cofactor.

It localises to the cytoplasm. The catalysed reaction is L-threonylcarbamoyladenylate + adenosine(37) in tRNA = N(6)-L-threonylcarbamoyladenosine(37) in tRNA + AMP + H(+). In terms of biological role, required for the formation of a threonylcarbamoyl group on adenosine at position 37 (t(6)A37) in tRNAs that read codons beginning with adenine. Is involved in the transfer of the threonylcarbamoyl moiety of threonylcarbamoyl-AMP (TC-AMP) to the N6 group of A37, together with TsaE and TsaB. TsaD likely plays a direct catalytic role in this reaction. The polypeptide is tRNA N6-adenosine threonylcarbamoyltransferase (Oenococcus oeni (strain ATCC BAA-331 / PSU-1)).